A 150-amino-acid polypeptide reads, in one-letter code: Heavy metal-associated isoprenylated plant protein 24 (150 aa).

The 64-residue stretch at 26 to 89 (QTVALRVARI…AAKSTKKKVE (64 aa)) folds into the HMA domain. The a metal cation site is built by Cys37 and Cys40. Cys147 carries the post-translational modification Cysteine methyl ester. Cys147 carries S-farnesyl cysteine lipidation. Residues 148-150 (AIM) constitute a propeptide, removed in mature form.

It belongs to the HIPP family. Interacts with ZHD11/HB29.

In terms of biological role, heavy-metal-binding protein. This chain is Heavy metal-associated isoprenylated plant protein 24, found in Arabidopsis thaliana (Mouse-ear cress).